The chain runs to 425 residues: Probable aminotransferase tcpI (425 aa).

An N6-(pyridoxal phosphate)lysine modification is found at Lys-256.

Belongs to the class-I pyridoxal-phosphate-dependent aminotransferase family. It depends on pyridoxal 5'-phosphate as a cofactor.

It functions in the pathway secondary metabolite biosynthesis. In terms of biological role, probable aminotransferase; part of the gene cluster that mediates the biosynthesis of an unusual class of epipolythiodioxopiperazines (ETPs) lacking the reactive thiol group important for toxicity. Firstly, L-tyrosine is prenylated by tcpD, before undergoing condensation with L-glycine in a reaction catalyzed by the NRPS tcpP leading to the diketopiperazine (DKP) backbone. Afterwards the alpha-carbon of tyrosine is oxidized by the cytochrome P450 tcpC to form a hydroxyl group. However, in contrast other ETP biosynthesis pathways studied so far, tcpC is not able to bishydroxylate the DKP at both alpha-carbon positions, but hydroxylates the alpha-carbon of the tyrosine part and the nitrogen of the glycine part. The next steps involve an alpha,beta-elimination reaction catalyzed by tcpI, a methylation by the methyltransferase tcpN the action of the four enzyme cascade tcpG/K/J/I. Due to a dysfunctional cytochrome P450 monooxygenase tcpC, the pathway leads to the biosynthesis of probable non-toxic metabolites lacking the reactive thiol group. The chain is Probable aminotransferase tcpI from Claviceps purpurea (strain 20.1) (Ergot fungus).